We begin with the raw amino-acid sequence, 160 residues long: Cytochrome b6-f complex subunit 4 (160 aa).

A run of 3 helical transmembrane segments spans residues 36 to 56 (LLYIFPVVILGTIACNVGLAV), 95 to 115 (LLGVLLMVSVPTGLLTVPFLE), and 131 to 151 (TVFLIGTAVALWLGIGATLPI).

The protein belongs to the cytochrome b family. PetD subfamily. As to quaternary structure, the 4 large subunits of the cytochrome b6-f complex are cytochrome b6, subunit IV (17 kDa polypeptide, petD), cytochrome f and the Rieske protein, while the 4 small subunits are petG, petL, petM and petN. The complex functions as a dimer.

The protein localises to the plastid. The protein resides in the chloroplast thylakoid membrane. Functionally, component of the cytochrome b6-f complex, which mediates electron transfer between photosystem II (PSII) and photosystem I (PSI), cyclic electron flow around PSI, and state transitions. The sequence is that of Cytochrome b6-f complex subunit 4 from Saccharum hybrid (Sugarcane).